A 115-amino-acid chain; its full sequence is NAD(P)H-quinone oxidoreductase subunit M, organellar chromatophore (115 aa).

The protein belongs to the complex I NdhM subunit family. In terms of assembly, NDH-1 can be composed of about 15 different subunits; different subcomplexes with different compositions have been identified which probably have different functions.

Its subcellular location is the plastid. It localises to the organellar chromatophore thylakoid membrane. The catalysed reaction is a plastoquinone + NADH + (n+1) H(+)(in) = a plastoquinol + NAD(+) + n H(+)(out). The enzyme catalyses a plastoquinone + NADPH + (n+1) H(+)(in) = a plastoquinol + NADP(+) + n H(+)(out). NDH-1 shuttles electrons from an unknown electron donor, via FMN and iron-sulfur (Fe-S) centers, to quinones in the respiratory and/or the photosynthetic chain. The immediate electron acceptor for the enzyme in this species is believed to be plastoquinone. Couples the redox reaction to proton translocation, and thus conserves the redox energy in a proton gradient. This Paulinella chromatophora protein is NAD(P)H-quinone oxidoreductase subunit M, organellar chromatophore.